A 317-amino-acid polypeptide reads, in one-letter code: Adenine deaminase (317 aa).

Zn(2+) contacts are provided by His-14, His-16, and His-194. The active-site Proton donor is Glu-197. Asp-275 is a Zn(2+) binding site. Asp-276 lines the substrate pocket.

Belongs to the metallo-dependent hydrolases superfamily. Adenosine and AMP deaminases family. Adenine deaminase type 2 subfamily. Requires Zn(2+) as cofactor.

It catalyses the reaction adenine + H2O + H(+) = hypoxanthine + NH4(+). Its function is as follows. Catalyzes the hydrolytic deamination of adenine to hypoxanthine. Plays an important role in the purine salvage pathway and in nitrogen catabolism. The polypeptide is Adenine deaminase (Pseudomonas savastanoi pv. phaseolicola (strain 1448A / Race 6) (Pseudomonas syringae pv. phaseolicola (strain 1448A / Race 6))).